Reading from the N-terminus, the 250-residue chain is Cobalt transport protein CbiM (250 aa).

A signal peptide spans 1–26 (MNKKEKRIVAIAAAFALCFGISPAVN). The next 6 helical transmembrane spans lie at 38–58 (KYCITWGILSIPFLVAGYFSI), 68–88 (SITMLAMAGAFVFVLSSLKIP), 102–122 (LGAILFGPSAVSILGIIVLIF), 134–154 (TLGANTFSMAIAGPFVSFGIY), 165–185 (LSGIFLAAFVGDLFTYCVTSI), and 209–229 (FAPTQVPLAIIEGILTVVIMI).

It belongs to the CbiM family. As to quaternary structure, forms an energy-coupling factor (ECF) transporter complex composed of an ATP-binding protein (A component, CbiO), a transmembrane protein (T component, CbiQ) and 2 possible substrate-capture proteins (S components, CbiM and CbiN) of unknown stoichimetry.

The protein resides in the cell membrane. Its pathway is cofactor biosynthesis; adenosylcobalamin biosynthesis. In terms of biological role, part of the energy-coupling factor (ECF) transporter complex CbiMNOQ involved in cobalt import. The chain is Cobalt transport protein CbiM from Lachnoclostridium phytofermentans (strain ATCC 700394 / DSM 18823 / ISDg) (Clostridium phytofermentans).